We begin with the raw amino-acid sequence, 298 residues long: MAHACVSTSASSLRFTAGFVSASPNGSSFDSPKLSLPFEPLRSRKTNKLVSDRKNWKNSTPKAVYSGNLWTPEIPSPQGVWSIRDDLQVPSSPYFPAYAQGQGPPPMVQERFQSIISQLFQYRIIRCGGAVDDDMANIIVAQLLYLDAVDPTKDIVMYVNSPGGSVTAGMAIFDTMRHIRPDVSTVCVGLAASMGAFLLSAGTKGKRYSLPNSRIMIHQPLGGAQGGQTDIDIQANEMLHHKANLNGYLAYHTGQSLEKINQDTDRDFFMSAKEAKEYGLIDGVIMNPLKALQPLAAA.

The transit peptide at 1-100 directs the protein to the chloroplast; it reads MAHACVSTSA…SSPYFPAYAQ (100 aa). Gly101 bears the N-acetylglycine mark. Ser193 acts as the Nucleophile in catalysis. Residue His218 is part of the active site.

Belongs to the peptidase S14 family. As to quaternary structure, component of the chloroplastic Clp protease core complex which consist of at least 16 proteins: CLPP4 (3 copies), CLPP5 (3 copies), CLPR4 (2 copies), ClpP1 (1 copy), CLPP6 (1 copy), CLPR2 (1 copy), CLPT1 (1 copy), CLPT2 (1 copy) and 3 copies of CLPP3 and/or CLPR1 and/or CLPR3. The core complex is organized in two heptameric rings, one containing CLPP3,4,5,6 in a 1:2:3:1 ratio and the other CLPP1 and CLPR1,2,3,4 in a 3:1:1:1:1 ratio. Interacts with CHIP. In terms of processing, ubiquitinated in vitro by CHIP. Mostly expressed in leaves. Also detected in stems, and to a lower extent, in roots (at protein level).

It is found in the plastid. It localises to the chloroplast stroma. The enzyme catalyses Hydrolysis of proteins to small peptides in the presence of ATP and magnesium. alpha-casein is the usual test substrate. In the absence of ATP, only oligopeptides shorter than five residues are hydrolyzed (such as succinyl-Leu-Tyr-|-NHMec, and Leu-Tyr-Leu-|-Tyr-Trp, in which cleavage of the -Tyr-|-Leu- and -Tyr-|-Trp bonds also occurs).. In terms of biological role, cleaves peptides in various proteins in a process that requires ATP hydrolysis. Has a chymotrypsin-like activity. Plays a major role in the degradation of misfolded proteins. In Arabidopsis thaliana (Mouse-ear cress), this protein is ATP-dependent Clp protease proteolytic subunit 5, chloroplastic.